Reading from the N-terminus, the 526-residue chain is MSDFYQDFNKRRTFAIISHPDAGKTTVTEKLLLFGGAIQLAGTVKGRKADRHATSDWMEMEKERGISITTSVMQFIHNQHVINLLDTPGHEDFSEDTYRTLTAVDSALMVIDVAKGVEERTVKLMEVCRLRDTPIMTFINKLDREGREPIDLLDEVESVLGIQCAPITWPVGMGKRFKGIYHRYQDIIYLYQQGSNAKKVEAMQIKGLDNPQLDELIGDSADELREEIELVKGASHEFNLEAYLAGKMTPVYFGSAINNFGIKELLDDFVEYAPGPQPRATQERVVSPHEETFSGFVFKIQANMDPKHRDRIAFVRVCSGSYKKGMKLNHLRIGKEVQISNALTFMAGDRSHTELALAGDIIGLHNHGTIRIGDTFTQGEHLKFTGIPNFAPELFRLVRLRDPLKSKALLKGLIELSEEGATQVFRPLNSNQLILGAVGILQFDVVAHRLKHEYKVDCIYESVNIACARWVYSEDDKAMSEFRTKAYDYLALDGGDMLMYLAPTKVNLTMAEERYPKIKFCATREH.

The tr-type G domain occupies 9-277 (NKRRTFAIIS…DFVEYAPGPQ (269 aa)). Residues 18–25 (SHPDAGKT), 86–90 (DTPGH), and 140–143 (NKLD) each bind GTP.

This sequence belongs to the TRAFAC class translation factor GTPase superfamily. Classic translation factor GTPase family. PrfC subfamily.

It localises to the cytoplasm. Functionally, increases the formation of ribosomal termination complexes and stimulates activities of RF-1 and RF-2. It binds guanine nucleotides and has strong preference for UGA stop codons. It may interact directly with the ribosome. The stimulation of RF-1 and RF-2 is significantly reduced by GTP and GDP, but not by GMP. The sequence is that of Peptide chain release factor 3 from Legionella pneumophila (strain Paris).